The chain runs to 61 residues: Defensin BmKDfsin1 (61 aa).

Positions 1–25 (MKTIVLLFVLVLVFALLVKMGMVEA) are cleaved as a signal peptide. Intrachain disulfides connect Cys-29–Cys-50, Cys-36–Cys-58, and Cys-40–Cys-60.

Belongs to the invertebrate defensin family. Type 2 subfamily. Highly expressed in non-venom gland (hemolymph) and moderately expressed in venom gland.

It is found in the secreted. Functionally, antibacterial peptide active against Gram-positive bacteria, but not on Gram-negative bacteria. Also has weak blocking activity on Kv1.1/KCNA1, Kv1.2/KCNA2, Kv1.3/KCNA3, KCa3.1/KCNN4/IK, KCa2.3/KCNN3/SK3 and Kv11.1/KCNH2/ERG1 channels (tested at 1 uM). It inhibits potassium channel current by interacting with the pore region. This Olivierus martensii (Manchurian scorpion) protein is Defensin BmKDfsin1.